We begin with the raw amino-acid sequence, 744 residues long: Tripartite motif-containing protein 2 (744 aa).

Phosphoserine is present on Ser10. The segment at 23 to 64 (CSICLERYKNPKVLPCLHTFCERCLQNYIPAHSLTLSCPVCR) adopts an RING-type zinc-finger fold. The segment at 113 to 154 (GKPLSCPNHDGNVMDFYCQSCETAMCRECTEGEHAEHPTVPL) adopts a B box-type zinc-finger fold. Zn(2+)-binding residues include Cys118, His121, Cys141, and His146. A Filamin repeat occupies 320 to 421 (TTNAVASETV…IRGSPFKLKV (102 aa)). Thr371 is subject to Phosphothreonine. Residues Ser375, Ser424, and Ser428 each carry the phosphoserine modification. The tract at residues 432-462 (EGVKRRVKSPGSGHVKQKAVKRPASMYSTGK) is disordered. NHL repeat units lie at residues 473–516 (IFRV…FSND), 520–563 (KSRF…FSSD), 564–605 (GKFK…FQPN), 609–652 (VTRF…FNQE), 656–699 (MLKF…FDGS), and 700–743 (GSFL…YRYL).

This sequence belongs to the TRIM/RBCC family. In terms of assembly, forms homooligomers. Interacts with TRIM3; this interaction reduces TRIM2 activity. Interacts with myosin V; myosin V may not be a substrate for ubiquitination. Interacts with NEFL. Interacts with phosphorylated BCL2L11. Interacts with SIRPA. RING-type zinc finger-dependent and UBE2D1-dependent autoubiquitination.

It is found in the cytoplasm. It catalyses the reaction S-ubiquitinyl-[E2 ubiquitin-conjugating enzyme]-L-cysteine + [acceptor protein]-L-lysine = [E2 ubiquitin-conjugating enzyme]-L-cysteine + N(6)-ubiquitinyl-[acceptor protein]-L-lysine.. It participates in protein modification; protein ubiquitination. Functionally, UBE2D1-dependent E3 ubiquitin-protein ligase that mediates the ubiquitination of NEFL and of phosphorylated BCL2L11. Plays a neuroprotective function. May play a role in neuronal rapid ischemic tolerance. Plays a role in antiviral immunity and limits New World arenavirus infection independently of its ubiquitin ligase activity. This chain is Tripartite motif-containing protein 2 (TRIM2), found in Ailuropoda melanoleuca (Giant panda).